Consider the following 539-residue polypeptide: Gamma-2-syntrophin (539 aa).

Residues 73 to 156 enclose the PDZ domain; that stretch reads TVTLRRQPVG…DVTITVEYLR (84 aa). A PH domain is found at 296 to 421; sequence QVVHMGWVNE…WEKAFQRATF (126 aa).

It belongs to the syntrophin family. Interacts with the dystrophin protein DMD and related proteins DTNA and DTNB.

The protein localises to the cell membrane. Its subcellular location is the sarcolemma. The protein resides in the cytoplasm. It localises to the cytoskeleton. Functionally, adapter protein that binds to and probably organizes the subcellular localization of a variety of proteins. May link various receptors to the actin cytoskeleton and the dystrophin glycoprotein complex. This is Gamma-2-syntrophin (Sntg2) from Mus musculus (Mouse).